The primary structure comprises 530 residues: MKVISGLLFFILISCSLFLVQGQVDCVTNSSDASCTNFQYPLANITADINNLCGSMPYMPVCTIQQSCNQESSTSGICDPFSILGDSCLHDMPGMSGCNNFKKLCASGSVVEQCSTVDSVTDLPTTMKMWANIKSICNEMTMTGCEKCTILNATCDVLTVYSTLCLAMPEMGQCANWTQMCASSGNMASSPISSGICTDEPTPATDCFTNPSDPSCADYVYTAANANADILNLCKSMPYMTVCSIQKSCNQESSTSGICAPFSILGDSCLHDMPGMNGCSNFKKLCASGSVVEQCSSVDSISNLPTTMQLFAGIKSICTEMAMDGCEKCSGNSPTTTCDVLPVYSSLCMAMPDMSQCANWTKMCSSSGQLYNSQITSDYCVASVADAVPIMRMYFHTGILDYILFKSWVPRTDRQFAGSWFAIFFFAIFFELEKTLRSILEKRWTPNKKDSEDNNLINSSFLSGSYPKFSYRDIIRGCLHAIELTCSYALMLVAMTFNVALFFAVIAGVLVGNILFGRYRNYTPRVTCCE.

The signal sequence occupies residues 1–22; the sequence is MKVISGLLFFILISCSLFLVQG. Residues 491 to 511 traverse the membrane as a helical segment; the sequence is MLVAMTFNVALFFAVIAGVLV.

It belongs to the SLC31A transporter family.

The protein localises to the late endosome membrane. In Dictyostelium discoideum (Social amoeba), this protein is Protein P80 (p80).